A 177-amino-acid chain; its full sequence is Biotin-dependent acetyl-/propionyl-coenzyme A carboxylase epsilon subunit (177 aa).

Positions 1-112 (MGTCPCESSE…TEKPLHPHEP (112 aa)) are disordered. A compositionally biased stretch (polar residues) spans 18-100 (VSGTNEVSDG…SDGNETNNPA (83 aa)).

As to quaternary structure, interacts with the AccA3/AccD5 biotin-dependent acyl-CoA carboxylase complex. Interacts with the AccA3/AccD6 complex. Is also part of the long-chain acyl-CoA carboxylase (LCC) complex, which is composed of AccA3, AccD4, AccD5 and AccE5. The four subunits are essential for activity, but AccD5, together with AccE5, probably plays a structural role rather than a catalytic one.

In terms of biological role, stimulates activity of the AccA3/AccD5 biotin-dependent acyl-CoA carboxylase complex. Interacts with AccD5 and modulates its carboxylase activity for acetyl-CoA and propionyl-CoA. Inhibits activity of the AccA3/AccD6 complex. Is also required for the activity of the long-chain acyl-CoA carboxylase (LCC) complex. This chain is Biotin-dependent acetyl-/propionyl-coenzyme A carboxylase epsilon subunit, found in Mycobacterium tuberculosis (strain ATCC 25618 / H37Rv).